Consider the following 307-residue polypeptide: 2-phospho-L-lactate transferase (307 aa).

The 7,8-didemethyl-8-hydroxy-5-deazariboflavin site is built by Asp48 and Lys87.

The protein belongs to the CofD family. Homodimer. The cofactor is Mg(2+).

It carries out the reaction (2S)-lactyl-2-diphospho-5'-guanosine + 7,8-didemethyl-8-hydroxy-5-deazariboflavin = oxidized coenzyme F420-0 + GMP + H(+). It functions in the pathway cofactor biosynthesis; coenzyme F420 biosynthesis. Catalyzes the transfer of the 2-phospholactate moiety from (2S)-lactyl-2-diphospho-5'-guanosine to 7,8-didemethyl-8-hydroxy-5-deazariboflavin (FO) with the formation of oxidized coenzyme F420-0 and GMP. In Methanosarcina acetivorans (strain ATCC 35395 / DSM 2834 / JCM 12185 / C2A), this protein is 2-phospho-L-lactate transferase.